The sequence spans 356 residues: Phosphate acyltransferase (356 aa).

The protein belongs to the PlsX family. Homodimer. Probably interacts with PlsY.

It is found in the cytoplasm. The enzyme catalyses a fatty acyl-[ACP] + phosphate = an acyl phosphate + holo-[ACP]. Its pathway is lipid metabolism; phospholipid metabolism. Its function is as follows. Catalyzes the reversible formation of acyl-phosphate (acyl-PO(4)) from acyl-[acyl-carrier-protein] (acyl-ACP). This enzyme utilizes acyl-ACP as fatty acyl donor, but not acyl-CoA. This is Phosphate acyltransferase from Escherichia coli (strain K12 / DH10B).